The sequence spans 343 residues: Leucine-rich repeat-containing protein 39 (343 aa).

LRR repeat units follow at residues 64–87, 88–110, 111–133, 134–156, 158–180, 181–203, 204–226, 228–249, 250–274, and 275–295; these read EEGR…LVQL, SQIQ…ISSF, QSLI…IGKL, TRLR…LGCC, NLEK…LSNL, KKLS…VVNL, PSLE…IHRM, KLHT…ISRM, KSLD…GMSN, and LRFV…PDLN.

Its subcellular location is the cytoplasm. The protein resides in the myofibril. It is found in the sarcomere. It localises to the m line. Component of the sarcomeric M-band which plays a role in myocyte response to biomechanical stress. May regulate expression of other M-band proteins via an SRF-dependent pathway. Important for normal contractile function in heart. The polypeptide is Leucine-rich repeat-containing protein 39 (Danio rerio (Zebrafish)).